We begin with the raw amino-acid sequence, 164 residues long: MDITKHLKPNLVDPNIEESIIKKLKPPVEDYWAPTKSGLHKFYHNFIRPNIYLIIFIIIVLLLLYYRYRRVKADKEKEKLEDTDKEFDKSTNNDTNSKKIYHRQKNSKTLNSSKKQSIDDTELLLQLYNLNKENLREPPITKSNFAYPMYPYHKGGTLISPGSR.

The helical transmembrane segment at 46–66 (FIRPNIYLIIFIIIVLLLLYY) threads the bilayer. Residues 72–137 (KADKEKEKLE…YNLNKENLRE (66 aa)) adopt a coiled-coil conformation. Residues 76 to 91 (EKEKLEDTDKEFDKST) show a composition bias toward basic and acidic residues. The interval 76–114 (EKEKLEDTDKEFDKSTNNDTNSKKIYHRQKNSKTLNSSK) is disordered.

Its subcellular location is the membrane. This is an uncharacterized protein from Acanthamoeba polyphaga mimivirus (APMV).